The following is a 422-amino-acid chain: Roquefortine prenyltransferase roqD (422 aa).

E100 contributes to the substrate binding site. Positions 113, 200, and 202 each coordinate dimethylallyl diphosphate. Substrate is bound at residue Y204. Dimethylallyl diphosphate is bound by residues K268, Y270, Y353, Y416, and Y420.

Belongs to the tryptophan dimethylallyltransferase family.

It functions in the pathway alkaloid biosynthesis. Functionally, roquefortine prenyltransferase; part of the gene cluster that mediates the biosynthesis of the mycotoxins roquefortine C and meleagrin. The first stage is catalyzed by the dipeptide synthase roqA which condenses histidine and tryptophan to produce histidyltryptophanyldiketopiperazine (HTD). HTD is then converted to roquefortine C through two possible pathways. In the first pathway, prenyltransferase roqD transforms HTD to the intermediate roquefortine D, which is in turn converted to roquefortine C by the cytochrome P450 monooxygenase roqR. In the second pathway, HTD is first converted to the intermediate dehydrohistidyltryptophanyldi-ketopiperazine (DHTD) by roqR which is then prenylated by roqD to form roquefortine C. Roquefortine C can be further transformed to meleagrin via three more reactions including oxydation to glandicolin A by roqM, which is further reduced to glandicoline B by roqO. Finally, glandicoline B is converted to meleagrin by the glandicoline B O-methyltransferase roqN. More studies identified further branching and additional metabolites produced by the roquefortine/meleagrin cluster, including roquefortine F, roquefortine L, roquefortine M, roquefortine N and neoxaline. This is Roquefortine prenyltransferase roqD from Penicillium rubens (strain ATCC 28089 / DSM 1075 / NRRL 1951 / Wisconsin 54-1255) (Penicillium chrysogenum).